Consider the following 214-residue polypeptide: Leucyl/phenylalanyl-tRNA--protein transferase (214 aa).

A disordered region spans residues 194-214 (FAPPGYSPDPASVVQRSSQTS).

This sequence belongs to the L/F-transferase family.

The protein localises to the cytoplasm. The enzyme catalyses N-terminal L-lysyl-[protein] + L-leucyl-tRNA(Leu) = N-terminal L-leucyl-L-lysyl-[protein] + tRNA(Leu) + H(+). It carries out the reaction N-terminal L-arginyl-[protein] + L-leucyl-tRNA(Leu) = N-terminal L-leucyl-L-arginyl-[protein] + tRNA(Leu) + H(+). The catalysed reaction is L-phenylalanyl-tRNA(Phe) + an N-terminal L-alpha-aminoacyl-[protein] = an N-terminal L-phenylalanyl-L-alpha-aminoacyl-[protein] + tRNA(Phe). In terms of biological role, functions in the N-end rule pathway of protein degradation where it conjugates Leu, Phe and, less efficiently, Met from aminoacyl-tRNAs to the N-termini of proteins containing an N-terminal arginine or lysine. In Cereibacter sphaeroides (strain ATCC 17025 / ATH 2.4.3) (Rhodobacter sphaeroides), this protein is Leucyl/phenylalanyl-tRNA--protein transferase.